Here is a 154-residue protein sequence, read N- to C-terminus: Myoglobin (154 aa).

The Globin domain maps to 2 to 148 (GLSDGEWQLV…FRNDMAAKYK (147 aa)). The residue at position 4 (Ser4) is a Phosphoserine. His65 is a binding site for nitrite. His65 serves as a coordination point for O2. The residue at position 68 (Thr68) is a Phosphothreonine. His94 contacts heme b.

The protein belongs to the globin family. Monomeric.

It is found in the cytoplasm. Its subcellular location is the sarcoplasm. The catalysed reaction is Fe(III)-heme b-[protein] + nitric oxide + H2O = Fe(II)-heme b-[protein] + nitrite + 2 H(+). The enzyme catalyses H2O2 + AH2 = A + 2 H2O. In terms of biological role, monomeric heme protein which primary function is to store oxygen and facilitate its diffusion within muscle tissues. Reversibly binds oxygen through a pentacoordinated heme iron and enables its timely and efficient release as needed during periods of heightened demand. Depending on the oxidative conditions of tissues and cells, and in addition to its ability to bind oxygen, it also has a nitrite reductase activity whereby it regulates the production of bioactive nitric oxide. Under stress conditions, like hypoxia and anoxia, it also protects cells against reactive oxygen species thanks to its pseudoperoxidase activity. This Saimiri sciureus (Common squirrel monkey) protein is Myoglobin (MB).